The primary structure comprises 211 residues: NADH-quinone oxidoreductase subunit I (211 aa).

The disordered stretch occupies residues 21 to 41; the sequence is PTTEQYPEQKKETAPRFHGRH. 4Fe-4S ferredoxin-type domains are found at residues 43-73 and 89-118; these read LNRH…VEGA and RVYQ…MSND. Positions 53, 56, 59, 63, 98, 101, 104, and 108 each coordinate [4Fe-4S] cluster. The disordered stretch occupies residues 141–211; it reads RAGMESPPHP…AHGAGSERPR (71 aa). Basic and acidic residues predominate over residues 152–166; that stretch reads RLGESETDYYTRDPD. Over residues 179–191 the composition is skewed to acidic residues; the sequence is DEADEAGEAGEAG. Positions 192–211 are enriched in basic and acidic residues; sequence EAERAADKVPAHGAGSERPR.

It belongs to the complex I 23 kDa subunit family. As to quaternary structure, NDH-1 is composed of 14 different subunits. Subunits NuoA, H, J, K, L, M, N constitute the membrane sector of the complex. It depends on [4Fe-4S] cluster as a cofactor.

It localises to the cell membrane. The enzyme catalyses a quinone + NADH + 5 H(+)(in) = a quinol + NAD(+) + 4 H(+)(out). Functionally, NDH-1 shuttles electrons from NADH, via FMN and iron-sulfur (Fe-S) centers, to quinones in the respiratory chain. The immediate electron acceptor for the enzyme in this species is believed to be ubiquinone. Couples the redox reaction to proton translocation (for every two electrons transferred, four hydrogen ions are translocated across the cytoplasmic membrane), and thus conserves the redox energy in a proton gradient. This Parafrankia sp. (strain EAN1pec) protein is NADH-quinone oxidoreductase subunit I.